The primary structure comprises 637 residues: Threonine--tRNA ligase (637 aa).

Residues methionine 1 to threonine 65 enclose the TGS domain. The interval aspartate 246–proline 537 is catalytic. Residues cysteine 337, histidine 388, and histidine 514 each coordinate Zn(2+).

Belongs to the class-II aminoacyl-tRNA synthetase family. In terms of assembly, homodimer. It depends on Zn(2+) as a cofactor.

Its subcellular location is the cytoplasm. It catalyses the reaction tRNA(Thr) + L-threonine + ATP = L-threonyl-tRNA(Thr) + AMP + diphosphate + H(+). Catalyzes the attachment of threonine to tRNA(Thr) in a two-step reaction: L-threonine is first activated by ATP to form Thr-AMP and then transferred to the acceptor end of tRNA(Thr). Also edits incorrectly charged L-seryl-tRNA(Thr). The sequence is that of Threonine--tRNA ligase from Leptothrix cholodnii (strain ATCC 51168 / LMG 8142 / SP-6) (Leptothrix discophora (strain SP-6)).